The chain runs to 162 residues: Phosphopantetheine adenylyltransferase (162 aa).

Ser-11 is a substrate binding site. Residues 11–12 (SF) and His-19 each bind ATP. The substrate site is built by Lys-43, Val-76, and Arg-90. ATP contacts are provided by residues 91–93 (GLR), Glu-101, and 126–132 (HLYISSS).

This sequence belongs to the bacterial CoaD family. In terms of assembly, homohexamer. The cofactor is Mg(2+).

Its subcellular location is the cytoplasm. It catalyses the reaction (R)-4'-phosphopantetheine + ATP + H(+) = 3'-dephospho-CoA + diphosphate. It functions in the pathway cofactor biosynthesis; coenzyme A biosynthesis; CoA from (R)-pantothenate: step 4/5. Its activity is regulated as follows. Is inhibited by a series of cycloalkyl pyrimidines, which also show suppression of bacterial growth. In terms of biological role, reversibly transfers an adenylyl group from ATP to 4'-phosphopantetheine, yielding dephospho-CoA (dPCoA) and pyrophosphate. This is Phosphopantetheine adenylyltransferase from Streptococcus pneumoniae (strain ATCC BAA-255 / R6).